We begin with the raw amino-acid sequence, 161 residues long: Large ribosomal subunit protein uL30m (161 aa).

A mitochondrion-targeting transit peptide spans 1-34; that stretch reads MAGILRLVVQWPPGRLQTVTKGVESLICTDWIRH.

Belongs to the universal ribosomal protein uL30 family. As to quaternary structure, component of the mitochondrial large ribosomal subunit (mt-LSU). Mature mammalian 55S mitochondrial ribosomes consist of a small (28S) and a large (39S) subunit. The 28S small subunit contains a 12S ribosomal RNA (12S mt-rRNA) and 30 different proteins. The 39S large subunit contains a 16S rRNA (16S mt-rRNA), a copy of mitochondrial valine transfer RNA (mt-tRNA(Val)), which plays an integral structural role, and 52 different proteins.

The protein localises to the mitochondrion. The protein is Large ribosomal subunit protein uL30m (MRPL30) of Homo sapiens (Human).